The chain runs to 111 residues: U-scoloptoxin(16)-Er8a (111 aa).

The N-terminal stretch at 1 to 26 (MTSTRKLSVSCLIVFMVSSLIAVSSG) is a signal peptide.

The protein belongs to the scoloptoxin-16 family. Post-translationally, contains 4 disulfide bonds. In terms of tissue distribution, expressed by the venom gland.

Its subcellular location is the secreted. The sequence is that of U-scoloptoxin(16)-Er8a from Ethmostigmus rubripes (Giant centipede).